The following is a 215-amino-acid chain: KID-containing protein 1 (215 aa).

Disordered regions lie at residues 1 to 132 (MAGG…NKKR) and 150 to 183 (NPKS…GDVL). The segment covering 64–81 (DSEEEDEESEEDNDEEEL) has biased composition (acidic residues). The Nuclear localization signal motif lies at 129–137 (NKKRRLQIY). Over residues 162–175 (DNDDEEGDDGDLSD) the composition is skewed to acidic residues. The tract at residues 177–204 (ERGGDVLARRPSFKNRALKSMSCFALSD) is kinase-inducible domain (KID). At Ser188 the chain carries Phosphoserine; by PKA.

In terms of assembly, interacts with HDA19; Ser-188 is critical for this interaction. In terms of tissue distribution, strongly expressed in stems, flowers, roots and immature siliques, but not detected in leaf blades of seedlings.

Its subcellular location is the nucleus. Its function is as follows. Transcription activator which may regulates gene expression through interaction with the histone deacetylase HDA19. The chain is KID-containing protein 1 from Brassica napus (Rape).